Here is a 581-residue protein sequence, read N- to C-terminus: Chaperonin GroEL 1 (581 aa).

Residues 29–32, 86–90, G413, and D492 each bind ATP; these read TIGP and DGTTT. The interval 522–543 is disordered; sequence PEPEPAAPGGPSGDPMGGMGGM. Positions 531-543 are enriched in gly residues; sequence GPSGDPMGGMGGM.

The protein belongs to the chaperonin (HSP60) family. In terms of assembly, forms a cylinder of 14 subunits composed of two heptameric rings stacked back-to-back. Interacts with the co-chaperonin GroES.

It is found in the cytoplasm. It catalyses the reaction ATP + H2O + a folded polypeptide = ADP + phosphate + an unfolded polypeptide.. Its function is as follows. Together with its co-chaperonin GroES, plays an essential role in assisting protein folding. The GroEL-GroES system forms a nano-cage that allows encapsulation of the non-native substrate proteins and provides a physical environment optimized to promote and accelerate protein folding. The protein is Chaperonin GroEL 1 of Prochlorococcus marinus (strain MIT 9215).